Reading from the N-terminus, the 829-residue chain is Sodium/hydrogen exchanger 3 (829 aa).

The first 26 residues, 1 to 26 (MWHRALGPGWKLLLALALTSLQGARG), serve as a signal peptide directing secretion. Over 27-46 (AEEEPSSDGSFQVVTFKWHH) the chain is Extracellular. A helical membrane pass occupies residues 47–69 (VQDPYIIALWILVASLAKIVFHL). Topologically, residues 70-77 (SHKVTSIV) are cytoplasmic. A helical membrane pass occupies residues 78-97 (PESALLIVLGLVLGGIVWAA). The Extracellular segment spans residues 98–106 (DHIASFTLT). A helical transmembrane segment spans residues 107–124 (PTLFFFYLLPPIVLDAGY). Topologically, residues 125–127 (FMP) are cytoplasmic. Residues 128-163 (NRLFFGNLGTILLYAVIGTIWNAATTGLSLYGVFLS) form a helical membrane-spanning segment. A 1,2-diacyl-sn-glycero-3-phospho-(1D-myo-inositol)-binding residues include Gly-133, Gly-136, and Thr-137. Residues 164–176 (GLMGELKIGLLDF) are Extracellular-facing. The chain crosses the membrane as a helical span at residues 177 to 198 (LLFGSLIAAVDPVAVLAVFEEV). Residues 199-200 (HV) are Cytoplasmic-facing. The helical transmembrane segment at 201-232 (NEVLFIIVFGESLLNDAVTVVLYNVFESFVTL) threads the bilayer. Residues 233–239 (GGDAVTG) lie on the Extracellular side of the membrane. Residues 240–274 (VDCVKGIVSFFVVSLGGTLVGVIFAFLLSLVTRFT) traverse the membrane as a helical segment. The Cytoplasmic segment spans residues 275–276 (KH). A helical membrane pass occupies residues 277 to 299 (VRIIEPGFVFVISYLSYLTSEML). Residues 300 to 301 (SL) lie on the Extracellular side of the membrane. The helical transmembrane segment at 302 to 318 (SSILAITFCGICCQKYV) threads the bilayer. Topologically, residues 319-325 (KANISEQ) are cytoplasmic. A helical transmembrane segment spans residues 326 to 354 (SATTVRYTMKMLASGAETIIFMFLGISAV). Topologically, residues 355–362 (NPDIWTWN) are extracellular. Residues 363-384 (TAFVLLTLVFISVYRAIGVVLQ) form a helical membrane-spanning segment. Over 385-397 (TWILNRYRMVQLE) the chain is Cytoplasmic. Position 393 (Met-393) interacts with a 1,2-diacyl-sn-glycero-3-phospho-(1D-myo-inositol). A helical membrane pass occupies residues 398–421 (TIDQVVMSYGGLRGAVAYALVVLL). The Extracellular segment spans residues 422 to 428 (DEKKVKE). The chain crosses the membrane as a helical span at residues 429–462 (KNLFVSTTLIVVFFTVIFQGLTIKPLVQWLKVKR). Residues 463 to 829 (SEHREPKLNE…QPAAPESTHM (367 aa)) lie on the Cytoplasmic side of the membrane. A 1,2-diacyl-sn-glycero-3-phospho-(1D-myo-inositol) is bound by residues Gln-492, Ile-493, and His-495. Residues Ser-550 and Ser-558 each carry the phosphoserine modification. The interval 571-585 (RPSTVEASVSYFLRE) is interaction with EZR. Residues 586 to 663 (NVSAVCLDMQ…RKRLESFKSA (78 aa)) are interaction with NHERF4. The tract at residues 587–691 (VSAVCLDMQS…AQKRRNSSIP (105 aa)) is interaction with AHCYL1. Phosphoserine occurs at positions 588 and 603. Residue Ser-659 is modified to Phosphoserine; by SGK1. Positions 677 to 687 (YKRERAQKRRN) are enriched in basic residues. The tract at residues 677–696 (YKRERAQKRRNSSIPNGKLP) is disordered. Phosphoserine is present on residues Ser-714, Ser-805, and Ser-808.

Belongs to the monovalent cation:proton antiporter 1 (CPA1) transporter (TC 2.A.36) family. In terms of assembly, homodimer. Found in the forms of complex and dynamic macromolecular complexes. Binds NHERF1 and NHERF2. Interacts with CHP1; this interaction increases trafficking and activity of SLC9A3 at the plasma membrane. Interacts with CHP2 and SHANK2. Interacts with PDZK1 (via C-terminal PDZ domain). Interacts with NHERF4 and interactions decrease in response to elevated calcium ion levels. Interacts with AHCYL1; the interaction is required for SLC9A3 activity. Interacts with EZR; interaction targets SLC9A3 to the apical membrane. Interacts with SNX27 (via PDZ domains); directs SLC9A3 membrane insertion from early endosomes to the plasma membrane. In terms of processing, phosphorylated by PKA, which inhibits activity. Phosphorylation at Ser-659 by SGK1 is associated with increased abundance at the cell membrane. Phosphorylation at Ser-714 by CSNK2A1 regulates SLC9A3 activity through the formation of multiple signaling complexes.

It is found in the apical cell membrane. It localises to the cell membrane. The protein resides in the recycling endosome membrane. Its subcellular location is the early endosome membrane. It carries out the reaction Na(+)(in) + H(+)(out) = Na(+)(out) + H(+)(in). With respect to regulation, seems to switch between active and inactive modes in response to various stimuli. Activated directly or indirectly by membrane phosphatidylinositol (PIs). Regulated by a variety of auxiliary proteins, which facilitate the maturation, cell surface expression and function of the transporter. Inhibited specifically by the drug tenapanor. Plasma membrane Na(+)/H(+) antiporter. Exchanges intracellular H(+) ions for extracellular Na(+) in 1:1 stoichiometry, playing a key role in salt and fluid absorption and pH homeostasis. Major apical Na(+)/H(+) exchanger in kidney and intestine playing an important role in renal and intestine Na(+) absorption and blood pressure regulation. This chain is Sodium/hydrogen exchanger 3, found in Mus musculus (Mouse).